The sequence spans 390 residues: Phosphopentomutase (390 aa).

The Mn(2+) site is built by Asp14, Asp286, His291, Asp327, His328, and His339.

This sequence belongs to the phosphopentomutase family. Mn(2+) serves as cofactor.

The protein localises to the cytoplasm. The catalysed reaction is 2-deoxy-alpha-D-ribose 1-phosphate = 2-deoxy-D-ribose 5-phosphate. The enzyme catalyses alpha-D-ribose 1-phosphate = D-ribose 5-phosphate. The protein operates within carbohydrate degradation; 2-deoxy-D-ribose 1-phosphate degradation; D-glyceraldehyde 3-phosphate and acetaldehyde from 2-deoxy-alpha-D-ribose 1-phosphate: step 1/2. Isomerase that catalyzes the conversion of deoxy-ribose 1-phosphate (dRib-1-P) and ribose 1-phosphate (Rib-1-P) to deoxy-ribose 5-phosphate (dRib-5-P) and ribose 5-phosphate (Rib-5-P), respectively. This is Phosphopentomutase from Exiguobacterium sibiricum (strain DSM 17290 / CCUG 55495 / CIP 109462 / JCM 13490 / 255-15).